The following is a 330-amino-acid chain: Ferredoxin--NADP reductase (330 aa).

FAD-binding residues include glutamate 35, glutamine 43, tyrosine 48, valine 90, phenylalanine 123, aspartate 285, and threonine 326.

Belongs to the ferredoxin--NADP reductase type 2 family. Homodimer. Requires FAD as cofactor.

The catalysed reaction is 2 reduced [2Fe-2S]-[ferredoxin] + NADP(+) + H(+) = 2 oxidized [2Fe-2S]-[ferredoxin] + NADPH. This Streptococcus pyogenes serotype M6 (strain ATCC BAA-946 / MGAS10394) protein is Ferredoxin--NADP reductase.